The sequence spans 243 residues: Triosephosphate isomerase (243 aa).

A substrate-binding site is contributed by 9-11 (NWK). H96 acts as the Electrophile in catalysis. The Proton acceptor role is filled by E165. Residues G171, S204, and 225 to 226 (GG) contribute to the substrate site.

It belongs to the triosephosphate isomerase family. Homodimer.

It localises to the cytoplasm. The enzyme catalyses D-glyceraldehyde 3-phosphate = dihydroxyacetone phosphate. It participates in carbohydrate biosynthesis; gluconeogenesis. The protein operates within carbohydrate degradation; glycolysis; D-glyceraldehyde 3-phosphate from glycerone phosphate: step 1/1. In terms of biological role, involved in the gluconeogenesis. Catalyzes stereospecifically the conversion of dihydroxyacetone phosphate (DHAP) to D-glyceraldehyde-3-phosphate (G3P). This is Triosephosphate isomerase from Synechococcus sp. (strain CC9902).